A 102-amino-acid polypeptide reads, in one-letter code: ATP-dependent Clp protease adapter protein ClpS (102 aa).

This sequence belongs to the ClpS family. Binds to the N-terminal domain of the chaperone ClpA.

In terms of biological role, involved in the modulation of the specificity of the ClpAP-mediated ATP-dependent protein degradation. In Herminiimonas arsenicoxydans, this protein is ATP-dependent Clp protease adapter protein ClpS.